The following is a 552-amino-acid chain: 5'-AMP-activated protein kinase catalytic subunit alpha-2 (552 aa).

Positions 16–268 (YVLGDTLGVG…IKDIREHEWF (253 aa)) constitute a Protein kinase domain. Residues 22-30 (LGVGTFGKV) and Lys-45 contribute to the ATP site. The active-site Proton acceptor is the Asp-139. Phosphothreonine; by LKB1 and CaMKK2 is present on Thr-172. Thr-258 is subject to Phosphothreonine. Residues 291-376 (EAVKEVCEKF…PERMPPLIAD (86 aa)) form an AIS region. A Phosphoserine modification is found at Ser-377. Residues 478–519 (EQRSGSSTPQRSCSAAGLHRPRSSLDSVTAESHSLSGSLSGS) form a disordered region. The segment covering 480-490 (RSGSSTPQRSC) has biased composition (polar residues). Ser-491 is modified (phosphoserine). A compositionally biased stretch (low complexity) spans 509-519 (SHSLSGSLSGS).

Belongs to the protein kinase superfamily. CAMK Ser/Thr protein kinase family. SNF1 subfamily. In terms of assembly, AMPK is a heterotrimer of an alpha catalytic subunit (PRKAA1 or PRKAA2), a beta (PRKAB1 or PRKAB2) and a gamma non-catalytic subunits (PRKAG1, PRKAG2 or PRKAG3). Interacts with FNIP1 and FNIP2. Interacts with DUSP29. Interacts with ARF6. The phosphorylated form at Thr-172 mediated by CamKK2 interacts with ACSS2. Mg(2+) is required as a cofactor. Post-translationally, ubiquitinated. In terms of processing, phosphorylated at Thr-172 by STK11/LKB1 in complex with STE20-related adapter-alpha (STRADA) pseudo kinase and CAB39. Also phosphorylated at Thr-172 by CAMKK2; triggered by a rise in intracellular calcium ions, without detectable changes in the AMP/ATP ratio. CAMKK1 can also phosphorylate Thr-172, but at much lower level. Dephosphorylated by protein phosphatase 2A and 2C (PP2A and PP2C). Phosphorylated by ULK1; leading to negatively regulate AMPK activity and suggesting the existence of a regulatory feedback loop between ULK1 and AMPK. Dephosphorylated by PPM1A and PPM1B at Thr-172 (mediated by STK11/LKB1).

The protein resides in the cytoplasm. The protein localises to the nucleus. The catalysed reaction is L-seryl-[protein] + ATP = O-phospho-L-seryl-[protein] + ADP + H(+). It catalyses the reaction L-threonyl-[protein] + ATP = O-phospho-L-threonyl-[protein] + ADP + H(+). The enzyme catalyses L-seryl-[acetyl-CoA carboxylase] + ATP = O-phospho-L-seryl-[acetyl-CoA carboxylase] + ADP + H(+). It carries out the reaction L-seryl-[3-hydroxy-3-methylglutaryl-coenzyme A reductase] + ATP = O-phospho-L-seryl-[3-hydroxy-3-methylglutaryl-coenzyme A reductase] + ADP + H(+). With respect to regulation, activated by phosphorylation on Thr-172. Binding of AMP to non-catalytic gamma subunit (PRKAG1, PRKAG2 or PRKAG3) results in allosteric activation, inducing phosphorylation on Thr-172. AMP-binding to gamma subunit also sustains activity by preventing dephosphorylation of Thr-172. ADP also stimulates Thr-172 phosphorylation, without stimulating already phosphorylated AMPK. ATP promotes dephosphorylation of Thr-172, rendering the enzyme inactive. Under physiological conditions AMPK mainly exists in its inactive form in complex with ATP, which is much more abundant than AMP. Selectively inhibited by compound C (6-[4-(2-Piperidin-1-yl-ethoxy)-phenyl)]-3-pyridin-4-yl-pyyrazolo[1,5-a] pyrimidine. Activated by resveratrol, a natural polyphenol present in red wine, and S17834, a synthetic polyphenol. Salicylate/aspirin directly activates kinase activity, primarily by inhibiting Thr-172 dephosphorylation. Functionally, catalytic subunit of AMP-activated protein kinase (AMPK), an energy sensor protein kinase that plays a key role in regulating cellular energy metabolism. In response to reduction of intracellular ATP levels, AMPK activates energy-producing pathways and inhibits energy-consuming processes: inhibits protein, carbohydrate and lipid biosynthesis, as well as cell growth and proliferation. AMPK acts via direct phosphorylation of metabolic enzymes, and by longer-term effects via phosphorylation of transcription regulators. Regulates lipid synthesis by phosphorylating and inactivating lipid metabolic enzymes such as ACACA, ACACB, GYS1, HMGCR and LIPE; regulates fatty acid and cholesterol synthesis by phosphorylating acetyl-CoA carboxylase (ACACA and ACACB) and hormone-sensitive lipase (LIPE) enzymes, respectively. Promotes lipolysis of lipid droplets by mediating phosphorylation of isoform 1 of CHKA (CHKalpha2). Regulates insulin-signaling and glycolysis by phosphorylating IRS1, PFKFB2 and PFKFB3. Involved in insulin receptor/INSR internalization. AMPK stimulates glucose uptake in muscle by increasing the translocation of the glucose transporter SLC2A4/GLUT4 to the plasma membrane, possibly by mediating phosphorylation of TBC1D4/AS160. Regulates transcription and chromatin structure by phosphorylating transcription regulators involved in energy metabolism such as CRTC2/TORC2, FOXO3, histone H2B, HDAC5, MEF2C, MLXIPL/ChREBP, EP300, HNF4A, p53/TP53, SREBF1, SREBF2 and PPARGC1A. Acts as a key regulator of glucose homeostasis in liver by phosphorylating CRTC2/TORC2, leading to CRTC2/TORC2 sequestration in the cytoplasm. In response to stress, phosphorylates 'Ser-36' of histone H2B (H2BS36ph), leading to promote transcription. Acts as a key regulator of cell growth and proliferation by phosphorylating FNIP1, TSC2, RPTOR, WDR24 and ATG1/ULK1: in response to nutrient limitation, negatively regulates the mTORC1 complex by phosphorylating RPTOR component of the mTORC1 complex and by phosphorylating and activating TSC2. Also phosphorylates and inhibits GATOR2 subunit WDR24 in response to nutrient limitation, leading to suppress glucose-mediated mTORC1 activation. In response to energetic stress, phosphorylates FNIP1, inactivating the non-canonical mTORC1 signaling, thereby promoting nuclear translocation of TFEB and TFE3, and inducing transcription of lysosomal or autophagy genes. In response to nutrient limitation, promotes autophagy by phosphorylating and activating ATG1/ULK1. In that process also activates WDR45/WIPI4. Phosphorylates CASP6, thereby preventing its autoprocessing and subsequent activation. AMPK also acts as a regulator of circadian rhythm by mediating phosphorylation of CRY1, leading to destabilize it. May regulate the Wnt signaling pathway by phosphorylating CTNNB1, leading to stabilize it. Also acts as a regulator of cellular polarity by remodeling the actin cytoskeleton; probably by indirectly activating myosin. Also phosphorylates CFTR, EEF2K, KLC1, NOS3 and SLC12A1. Plays an important role in the differential regulation of pro-autophagy (composed of PIK3C3, BECN1, PIK3R4 and UVRAG or ATG14) and non-autophagy (composed of PIK3C3, BECN1 and PIK3R4) complexes, in response to glucose starvation. Can inhibit the non-autophagy complex by phosphorylating PIK3C3 and can activate the pro-autophagy complex by phosphorylating BECN1. Upon glucose starvation, promotes ARF6 activation in a kinase-independent manner leading to cell migration. Upon glucose deprivation mediates the phosphorylation of ACSS2 at 'Ser-659', which exposes the nuclear localization signal of ACSS2, required for its interaction with KPNA1 and nuclear translocation. Upon stress, regulates mitochondrial fragmentation through phosphorylation of MTFR1L. In Sus scrofa (Pig), this protein is 5'-AMP-activated protein kinase catalytic subunit alpha-2 (PRKAA2).